An 865-amino-acid chain; its full sequence is Xylosyltransferase 2 (865 aa).

The Cytoplasmic portion of the chain corresponds to 1–15 (MVASARVQKLVRRYK). A helical; Signal-anchor for type II membrane protein transmembrane segment spans residues 16 to 36 (LAIATALAILLLQGLVVWSFS). Over 37 to 865 (GLEEDEAGEK…GPVKADGRLR (829 aa)) the chain is Lumenal. The segment at 41 to 157 (DEAGEKGRQR…EGAPQPTDNG (117 aa)) is disordered. Over residues 53-65 (RPLDPGEGSKDTD) the composition is skewed to basic and acidic residues. Positions 73–82 (STGRRHGRWR) are enriched in basic residues. N-linked (GlcNAc...) asparagine glycosylation occurs at Asn-122. The segment covering 125 to 137 (GAAAGEALVGAAG) has biased composition (low complexity). 4 disulfide bridges follow: Cys-162–Cys-190, Cys-206–Cys-448, Cys-467–Cys-480, and Cys-469–Cys-478. Residues Val-239, Asp-267, and 296–298 (TIW) each bind UDP-alpha-D-xylose. Asn-327 carries an N-linked (GlcNAc...) asparagine glycan. 400–401 (DW) is a UDP-alpha-D-xylose binding site. Residues Ser-481 and 504–505 (RK) each bind UDP-alpha-D-xylose. 2 cysteine pairs are disulfide-bonded: Cys-581–Cys-833 and Cys-826–Cys-839. Asn-683 carries an N-linked (GlcNAc...) asparagine glycan. Residues 846–865 (SLSPDPKSELGPVKADGRLR) form a disordered region.

It belongs to the glycosyltransferase 14 family. XylT subfamily. As to quaternary structure, monomer. Mg(2+) serves as cofactor. Mn(2+) is required as a cofactor. Contains disulfide bonds.

Its subcellular location is the golgi apparatus membrane. It localises to the secreted. The catalysed reaction is UDP-alpha-D-xylose + L-seryl-[protein] = 3-O-(beta-D-xylosyl)-L-seryl-[protein] + UDP + H(+). It functions in the pathway glycan metabolism; chondroitin sulfate biosynthesis. Its pathway is glycan metabolism; heparan sulfate biosynthesis. Catalyzes the first step in the biosynthesis of chondroitin sulfate, heparan sulfate and dermatan sulfate proteoglycans, such as DCN. Transfers D-xylose from UDP-D-xylose to specific serine residues of the core protein. This chain is Xylosyltransferase 2 (XYLT2), found in Pan troglodytes (Chimpanzee).